We begin with the raw amino-acid sequence, 224 residues long: UPF0758 protein RSc2444 (224 aa).

The region spanning 102 to 224 is the MPN domain; that stretch reads TLESPQSVKD…VYSFLEHGKM (123 aa). Zn(2+) contacts are provided by H173, H175, and D186. Residues 173 to 186 carry the JAMM motif motif; it reads HNHPTGHVEPSESD.

This sequence belongs to the UPF0758 family.

The protein is UPF0758 protein RSc2444 of Ralstonia nicotianae (strain ATCC BAA-1114 / GMI1000) (Ralstonia solanacearum).